Reading from the N-terminus, the 154-residue chain is uncharacterized protein (154 aa).

H47, H127, and H131 together coordinate a divalent metal cation. Position 150 is a phosphotyrosine (Y150).

The protein belongs to the DinB family. As to quaternary structure, homodimer.

This is an uncharacterized protein from Bacillus subtilis (strain 168).